The sequence spans 397 residues: Phosphoglycerate kinase (397 aa).

Residues 23-25 (DLN), Arg-38, 61-64 (HLGR), Arg-119, and Arg-152 each bind substrate. ATP contacts are provided by residues Lys-202, Glu-324, and 354 to 357 (GGDT).

Belongs to the phosphoglycerate kinase family. In terms of assembly, monomer.

Its subcellular location is the cytoplasm. It carries out the reaction (2R)-3-phosphoglycerate + ATP = (2R)-3-phospho-glyceroyl phosphate + ADP. Its pathway is carbohydrate degradation; glycolysis; pyruvate from D-glyceraldehyde 3-phosphate: step 2/5. The protein is Phosphoglycerate kinase (pgk) of Xanthobacter flavus.